Consider the following 113-residue polypeptide: MNNTLSKRLCLTAMLALGAVVYTTSAFANTSKLIIESGDSAQSRQHAAMEKEQWNDTRSLRQKVNTRTEKEWDKADAAFDNRDKCEQSANLNAYWEPNTLRCLDRRTGRTVAP.

The first 28 residues, 1–28 (MNNTLSKRLCLTAMLALGAVVYTTSAFA), serve as a signal peptide directing secretion. The segment at 44 to 67 (RQHAAMEKEQWNDTRSLRQKVNTR) is disordered. Over residues 47–59 (AAMEKEQWNDTRS) the composition is skewed to basic and acidic residues.

The protein belongs to the UPF0482 family.

The sequence is that of UPF0482 protein CKO_01577 from Citrobacter koseri (strain ATCC BAA-895 / CDC 4225-83 / SGSC4696).